A 284-amino-acid chain; its full sequence is Phosphonates import ATP-binding protein PhnC 2 (284 aa).

Residues 24 to 264 (IRIDGISVRR…LEARIFPSLA (241 aa)) enclose the ABC transporter domain. 56-63 (GPSGVGKT) is an ATP binding site.

Belongs to the ABC transporter superfamily. Phosphonates importer (TC 3.A.1.9.1) family. In terms of assembly, the complex is composed of two ATP-binding proteins (PhnC), two transmembrane proteins (PhnE) and a solute-binding protein (PhnD).

It is found in the cell inner membrane. The catalysed reaction is phosphonate(out) + ATP + H2O = phosphonate(in) + ADP + phosphate + H(+). Its function is as follows. Part of the ABC transporter complex PhnCDE involved in phosphonates import. Responsible for energy coupling to the transport system. This Rhodopseudomonas palustris (strain ATCC BAA-98 / CGA009) protein is Phosphonates import ATP-binding protein PhnC 2.